A 659-amino-acid polypeptide reads, in one-letter code: 4-alpha-glucanotransferase (659 aa).

Glutamate 123 acts as the Nucleophile in catalysis. The active-site Proton donor is aspartate 214.

The protein belongs to the glycosyl hydrolase 57 family. As to quaternary structure, homodimer.

It catalyses the reaction Transfers a segment of a (1-&gt;4)-alpha-D-glucan to a new position in an acceptor, which may be glucose or a (1-&gt;4)-alpha-D-glucan.. Inhibited by p-chloromercuribenzoic acid, monoiodoacetic acid, mercury and nickel ions. Catalyzes the transglycosylation of maltooligosaccharides, yielding maltooligosaccharides of various lengths and glucose. Maltose and glucose can be used as acceptors in the transfer reaction. This chain is 4-alpha-glucanotransferase (jgt), found in Thermococcus litoralis (strain ATCC 51850 / DSM 5473 / JCM 8560 / NS-C).